Consider the following 216-residue polypeptide: Glycerol uptake facilitator protein-like 6 (216 aa).

Helical transmembrane passes span 5–25 and 30–50; these read LAEFLGTFMLVFLGTATVVIA and LAIGLAFGLAITVSAYAFGGI. The NPA 1 motif lies at 56-58; sequence NPA. 3 helical membrane passes run 72–92, 114–134, and 147–167; these read ADAIGYIIAQIIGAIVASAAV, IGSGMAFFVEALVTFLFLMVI, and FAGLTIGVTLAFLIIVALNLT. The NPA 2 signature appears at 172-174; sequence NPA. Residues 191–213 traverse the membrane as a helical segment; sequence LWVYILAPEVGAILAAFCARVMG.

It belongs to the MIP/aquaporin (TC 1.A.8) family.

It localises to the cell membrane. In terms of biological role, probable transporter that facilitates the transmembrane diffusion of an unknown substrate. Is not permeable to water, dihydroxyacetone, glycerol, urea, H(2)O(2) and D/L-lactic acid. The polypeptide is Glycerol uptake facilitator protein-like 6 (Lactiplantibacillus plantarum (strain ATCC BAA-793 / NCIMB 8826 / WCFS1) (Lactobacillus plantarum)).